Here is a 580-residue protein sequence, read N- to C-terminus: MDGVEIIAKSIKNSAIEKVFGIVGVPITPIAYELQAQGVGFFGFRNEQSCSYAASIVGYLTGLPGLCMTVSGPGVVHALAGVLNAQSNGWPMILLSSSIDQSLVGKGGFQECKQFESAELYCKKCYYLTEIDHFPEILKDAIETSLSNRPGPVYIQIPADLIKSKCKESPNIREAAGYGTIAIKSVVPDMKLIKDAVQLLSEAKRPLVIGGKGAAYCRSENELLEFIEATKIPFLPSPMGKGLLRDDHPLVVGAARSYALKNADVVLVLGARLNWMFNFGKAPTFSTDVKFIIVDVDENQASKTKNPNVVPEIAIVGDARLSIAEMRKLFIGETDEQPQPPQDSLIKSMKMEESWWSNLNQDIQVKTKSLATLMSEPQNNDQEYLTYHKVFNALRVGGLFQEDTIFVNEGANTMDIGRLCIPQTLPRSRLDAGTLATMGVGVGYSVAAQICFPDRSVVCIQGDSAFGFSAMEMEVAVRYKLPIVFIVLNNNGVYEGLESMSDPKYTSSTESASLHIPPTSLSVDTKYELIMQSFGGTGYSISTISNLLDICKQIKSKQISLPTLLNIKIKPTGTKPKIVH.

Thiamine diphosphate is bound at residue Glu47. Residues 413–494 (TMDIGRLCIP…FIVLNNNGVY (82 aa)) are thiamine pyrophosphate binding. 2 residues coordinate Mg(2+): Asp463 and Asn490.

The protein belongs to the TPP enzyme family. In terms of assembly, homotetramer. Requires Mg(2+) as cofactor. It depends on thiamine diphosphate as a cofactor.

It is found in the peroxisome. The catalysed reaction is a 2-hydroxy-3-methyl fatty acyl-CoA = a 2-methyl-branched fatty aldehyde + formyl-CoA. It catalyses the reaction an (R)-2-hydroxy-long-chain-fatty acyl-CoA = a long-chain fatty aldehyde + formyl-CoA. It carries out the reaction 2-hydroxy-3-methylhexadecanoyl-CoA = 2-methylpentadecanal + formyl-CoA. The enzyme catalyses 2-hydroxyoctadecanoyl-CoA = heptadecanal + formyl-CoA. In terms of biological role, peroxisomal 2-OH acyl-CoA lyase involved in the cleavage (C1 removal) reaction in the fatty acid alpha-oxydation in a thiamine pyrophosphate (TPP)-dependent manner. Involved in the degradation of 3-methyl-branched fatty acids and the shortening of 2-hydroxy long-chain fatty acids. This is 2-hydroxyacyl-CoA lyase 1 (hacl1) from Dictyostelium discoideum (Social amoeba).